The chain runs to 226 residues: Late protein I226R (226 aa).

A signal peptide spans 1-16 (MKMETFLVCLFHNAKG). The N-linked (GlcNAc...) asparagine; by host glycan is linked to Asn164.

The protein belongs to the asfivirus I226R family.

In terms of biological role, plays a role in the inhibition of host NF-kappa-B and IRF3 signaling pathways. Mechanistically, promotes the degradation of host IKBKG through enhancing its ubiquitination leading to inhibition of both pathways. The protein is Late protein I226R of Ornithodoros (relapsing fever ticks).